A 90-amino-acid chain; its full sequence is Probable Fe(2+)-trafficking protein (90 aa).

The protein belongs to the Fe(2+)-trafficking protein family.

In terms of biological role, could be a mediator in iron transactions between iron acquisition and iron-requiring processes, such as synthesis and/or repair of Fe-S clusters in biosynthetic enzymes. The polypeptide is Probable Fe(2+)-trafficking protein (Azoarcus sp. (strain BH72)).